We begin with the raw amino-acid sequence, 207 residues long: Small ribosomal subunit protein uS5 (207 aa).

A disordered region spans residues methionine 1–tryptophan 51. A compositionally biased stretch (basic and acidic residues) spans glutamate 24 to tryptophan 51. The region spanning tryptophan 51–valine 114 is the S5 DRBM domain.

It belongs to the universal ribosomal protein uS5 family. In terms of assembly, part of the 30S ribosomal subunit. Contacts proteins S4 and S8.

With S4 and S12 plays an important role in translational accuracy. In terms of biological role, located at the back of the 30S subunit body where it stabilizes the conformation of the head with respect to the body. The polypeptide is Small ribosomal subunit protein uS5 (Prochlorococcus marinus (strain MIT 9312)).